Consider the following 274-residue polypeptide: tRNA pseudouridine synthase A (274 aa).

The Nucleophile role is filled by aspartate 56. Tyrosine 109 is a binding site for substrate.

The protein belongs to the tRNA pseudouridine synthase TruA family.

It carries out the reaction uridine(38/39/40) in tRNA = pseudouridine(38/39/40) in tRNA. In terms of biological role, formation of pseudouridine at positions 38, 39 and 40 in the anticodon stem and loop of transfer RNAs. The polypeptide is tRNA pseudouridine synthase A (Methanosphaera stadtmanae (strain ATCC 43021 / DSM 3091 / JCM 11832 / MCB-3)).